The following is a 227-amino-acid chain: Cytidylate kinase (227 aa).

ATP is bound at residue 12 to 20; sequence GPSGAGKGT.

This sequence belongs to the cytidylate kinase family. Type 1 subfamily.

It localises to the cytoplasm. The catalysed reaction is CMP + ATP = CDP + ADP. It carries out the reaction dCMP + ATP = dCDP + ADP. The protein is Cytidylate kinase of Shigella boydii serotype 4 (strain Sb227).